The sequence spans 397 residues: DNA-directed RNA polymerase subunit Rpo1C (397 aa).

The protein belongs to the RNA polymerase beta' chain family. Part of the RNA polymerase complex.

It localises to the cytoplasm. It catalyses the reaction RNA(n) + a ribonucleoside 5'-triphosphate = RNA(n+1) + diphosphate. Functionally, DNA-dependent RNA polymerase (RNAP) catalyzes the transcription of DNA into RNA using the four ribonucleoside triphosphates as substrates. Forms part of the jaw domain. The protein is DNA-directed RNA polymerase subunit Rpo1C of Methanosarcina acetivorans (strain ATCC 35395 / DSM 2834 / JCM 12185 / C2A).